The sequence spans 440 residues: MESQQLSQHSPISHGSACASVTSKEVHTNQDPLDVSASKIQEYDKASTKANSQQTTTPASSAVPENPHHASPQTAQSHSPQNGPYPQQCMMTQNQANPSDWSFYGRPSMIPYTPYQMSPMYFPPGPHSQFPQYPSSVGTPLSTPSPESGNTFTDSSSADSDMTSTKKYVRPPPMLTSPNDFLNWVKTYIKFLQNSNLGGIIPTVNGKPVRQITDDELTFLYNTFQIFAPSQFLPTWVKDILSVDYTDIMKILSKSIEKMQSDTQEANDIVTLANLQYNGSTPADAFETKVTNIIDRLNNNGIHINNKVACQLIMRGLSGEYKFLRYTRHRHLNMTVAELFLDIHAIYEEQQGSRNSKPNYRRNPSDEKNDSRSYTNTTKPKVIARNPQKTNNSKSKTARAHNVSTSNNSPSTDNDSISKSTTEPIQLNNKHDLHLRPETY.

Polar residues-rich tracts occupy residues 1-23 (MESQ…SVTS), 48-60 (TKAN…TPAS), 71-97 (SPQT…NQAN), and 129-152 (QFPQ…GNTF). Disordered stretches follow at residues 1–97 (MESQ…NQAN), 129–171 (QFPQ…YVRP), and 352–440 (GSRN…PETY). Residues 153–165 (TDSSSADSDMTST) show a composition bias toward low complexity. Residues 299–401 (NNGIHINNKV…NSKSKTARAH (103 aa)) are RNA-binding. A compositionally biased stretch (low complexity) spans 402–418 (NVSTSNNSPSTDNDSIS). Phosphoserine is present on serine 416. The segment covering 419 to 428 (KSTTEPIQLN) has biased composition (polar residues). Residues 429–440 (NKHDLHLRPETY) show a composition bias toward basic and acidic residues.

Homotrimer.

Its subcellular location is the cytoplasm. Its function is as follows. Capsid protein (CA) is the structural component of the virus-like particle (VLP), forming the shell that encapsulates the retrotransposons dimeric RNA genome. The particles are assembled from trimer-clustered units and there are holes in the capsid shells that allow for the diffusion of macromolecules. CA also has nucleocapsid-like chaperone activity, promoting primer tRNA(i)-Met annealing to the multipartite primer-binding site (PBS), dimerization of Ty1 RNA and initiation of reverse transcription. This Saccharomyces cerevisiae (strain ATCC 204508 / S288c) (Baker's yeast) protein is Transposon Ty1-NL2 Gag polyprotein (TY1A-NL2).